The chain runs to 166 residues: Putative pre-16S rRNA nuclease (166 aa).

It belongs to the YqgF nuclease family.

Its subcellular location is the cytoplasm. Its function is as follows. Could be a nuclease involved in processing of the 5'-end of pre-16S rRNA. The protein is Putative pre-16S rRNA nuclease of Mesorhizobium japonicum (strain LMG 29417 / CECT 9101 / MAFF 303099) (Mesorhizobium loti (strain MAFF 303099)).